The sequence spans 395 residues: D-alanine--D-alanine ligase (395 aa).

The region spanning 172–391 is the ATP-grasp domain; it reads KVVLGAAGIP…YTELITRLIE (220 aa). Residue 204-266 coordinates ATP; that stretch reads DAGLTYPLFI…EQGIDGREIE (63 aa). Residues D345, E358, and N360 each coordinate Mg(2+).

The protein belongs to the D-alanine--D-alanine ligase family. It depends on Mg(2+) as a cofactor. The cofactor is Mn(2+).

It is found in the cytoplasm. The enzyme catalyses 2 D-alanine + ATP = D-alanyl-D-alanine + ADP + phosphate + H(+). It participates in cell wall biogenesis; peptidoglycan biosynthesis. In terms of biological role, cell wall formation. This is D-alanine--D-alanine ligase from Bifidobacterium longum subsp. infantis (strain ATCC 15697 / DSM 20088 / JCM 1222 / NCTC 11817 / S12).